Reading from the N-terminus, the 164-residue chain is tRNA (cytidine(34)-2'-O)-methyltransferase (164 aa).

The S-adenosyl-L-methionine site is built by Met-80, Gly-102, Val-124, and Ser-132.

It belongs to the class IV-like SAM-binding methyltransferase superfamily. RNA methyltransferase TrmH family. TrmL subfamily. In terms of assembly, homodimer.

It localises to the cytoplasm. It catalyses the reaction cytidine(34) in tRNA + S-adenosyl-L-methionine = 2'-O-methylcytidine(34) in tRNA + S-adenosyl-L-homocysteine + H(+). It carries out the reaction 5-carboxymethylaminomethyluridine(34) in tRNA(Leu) + S-adenosyl-L-methionine = 5-carboxymethylaminomethyl-2'-O-methyluridine(34) in tRNA(Leu) + S-adenosyl-L-homocysteine + H(+). Its function is as follows. Methylates the ribose at the nucleotide 34 wobble position in the two leucyl isoacceptors tRNA(Leu)(CmAA) and tRNA(Leu)(cmnm5UmAA). Catalyzes the methyl transfer from S-adenosyl-L-methionine to the 2'-OH of the wobble nucleotide. The polypeptide is tRNA (cytidine(34)-2'-O)-methyltransferase (Polaromonas sp. (strain JS666 / ATCC BAA-500)).